The sequence spans 429 residues: Gamma-glutamyl phosphate reductase (429 aa).

The protein belongs to the gamma-glutamyl phosphate reductase family.

The protein localises to the cytoplasm. The enzyme catalyses L-glutamate 5-semialdehyde + phosphate + NADP(+) = L-glutamyl 5-phosphate + NADPH + H(+). It functions in the pathway amino-acid biosynthesis; L-proline biosynthesis; L-glutamate 5-semialdehyde from L-glutamate: step 2/2. Catalyzes the NADPH-dependent reduction of L-glutamate 5-phosphate into L-glutamate 5-semialdehyde and phosphate. The product spontaneously undergoes cyclization to form 1-pyrroline-5-carboxylate. This Bradyrhizobium sp. (strain BTAi1 / ATCC BAA-1182) protein is Gamma-glutamyl phosphate reductase.